We begin with the raw amino-acid sequence, 88 residues long: Small ribosomal subunit protein bS20 (88 aa).

The interval 1-27 is disordered; the sequence is MANSKSAKKRALQSEKRRQHNASRRSM.

This sequence belongs to the bacterial ribosomal protein bS20 family.

Binds directly to 16S ribosomal RNA. The sequence is that of Small ribosomal subunit protein bS20 from Shewanella loihica (strain ATCC BAA-1088 / PV-4).